Reading from the N-terminus, the 499-residue chain is Glutamyl-tRNA(Gln) amidotransferase subunit A (499 aa).

Catalysis depends on charge relay system residues Lys79 and Ser154. Ser178 acts as the Acyl-ester intermediate in catalysis.

Belongs to the amidase family. GatA subfamily. Heterotrimer of A, B and C subunits.

It catalyses the reaction L-glutamyl-tRNA(Gln) + L-glutamine + ATP + H2O = L-glutaminyl-tRNA(Gln) + L-glutamate + ADP + phosphate + H(+). Allows the formation of correctly charged Gln-tRNA(Gln) through the transamidation of misacylated Glu-tRNA(Gln) in organisms which lack glutaminyl-tRNA synthetase. The reaction takes place in the presence of glutamine and ATP through an activated gamma-phospho-Glu-tRNA(Gln). The chain is Glutamyl-tRNA(Gln) amidotransferase subunit A from Psychrobacter sp. (strain PRwf-1).